The following is an 888-amino-acid chain: MSNWYSKTKDQTLIDLETNEQHGLTEEIASERLKQYGSNELATKQKRTLWQRIFAQINDVLVYVLIIAALISAFVGEWADASIIALVVVLNAVIGVVQESKAEQALEALKKMATPKAIVKRDGELKEIPSEHVVPGDIVMLDAGRYIPCDLRLIETANLKVEESALTGESVPVDKDAIYHPSMQSDEQVPLGDQKNMAFMSTLVTYGRGVGVAVETGMNSQIGKIATLLHEADDDMTPLQKSLAQVGKYLGFVAVAICIVMFLIGFLQRRDTLEMFMTAISLAVAAIPEGLPAIVSIVLAIGVQRMIKQNVIIRKLPAVEALGSVTIICSDKTGTLTQNKMTVTHFYSDNTYDQLENLNVNNDVQRLLLENMVLCNDASYNNESQTGDPTEIALLVAGSTFNMQKDYLEKIHERINELPFDSDRKMMSTVHTYDESYYSMTKGAIDKLLPRCTHILKNGKIEVLTEADKNQILEAARAMSREALRVLSFAFKQYNSSNVDIDHLEENLIFIGLVGMIDPPRTEVKDSITECKKAGIRTVMITGDHKDTAFAIAKELGIAEDICEIMIGTELDNISDTELASKIDHLHVFARVSPEHKVKIVKALRAKGNIVSMTGDGVNDAPSLKQADVGVAMGITGTDVAKGAADVVLTDDNFSSIVKAVEEGRNIYRNIKKSILFLLSCNFGEIITLFLAILLGWATPLRPIHILWVNLITDTLPALSLGVDPEDPDVMKEKPRHAKESLFSGSVPFLIFNGVVIGLLTLIAFIAGAKFYTGDTNLFPLFPERIDEDALLHAQTMAFVVLSFSQLVHSFNLRSRTKSIFSIGIFTNKYLVFSLLIGVLMQVCIISIPPLANIFGVHALTLRDWGFVLLLSIIPLVVNEIIKLAKKN.

4 helical membrane passes run 53–75 (IFAQ…SAFV), 79–97 (ADAS…IGVV), 246–266 (VGKY…LIGF), and 283–303 (AVAA…AIGV). Valine 284, alanine 285, isoleucine 287, and glutamate 289 together coordinate Ca(2+). Aspartate 331 (4-aspartylphosphate intermediate) is an active-site residue. The next 6 membrane-spanning stretches (helical) occupy residues 675 to 695 (ILFL…AILL), 703 to 723 (PIHI…SLGV), 747 to 767 (VPFL…AFIA), 791 to 811 (LLHA…VHSF), 831 to 851 (LVFS…IPPL), and 865 to 885 (WGFV…IKLA). 2 residues coordinate Ca(2+): asparagine 710 and aspartate 714.

The protein belongs to the cation transport ATPase (P-type) (TC 3.A.3) family. Type IIA subfamily.

The protein resides in the cell membrane. It carries out the reaction Ca(2+)(in) + ATP + H2O = Ca(2+)(out) + ADP + phosphate + H(+). Inhibited by cyclopiazonic acid (CPA). Functionally, catalyzes the hydrolysis of ATP coupled with the transport of calcium. The polypeptide is Calcium-transporting ATPase 1 (Bacillus cereus (strain ATCC 10987 / NRS 248)).